A 147-amino-acid chain; its full sequence is Ribonuclease VapC43 (147 aa).

One can recognise a PINc domain in the interval cysteine 3–histidine 139. The Mg(2+) site is built by aspartate 5 and aspartate 108.

It belongs to the PINc/VapC protein family. It depends on Mg(2+) as a cofactor.

Toxic component of a type II toxin-antitoxin (TA) system. An RNase. Its toxic effect is neutralized by coexpression with cognate antitoxin VapB43. This chain is Ribonuclease VapC43, found in Mycobacterium tuberculosis (strain CDC 1551 / Oshkosh).